A 502-amino-acid chain; its full sequence is UPF0371 protein CLD_0424 (502 aa).

The protein belongs to the UPF0371 family.

In Clostridium botulinum (strain Okra / Type B1), this protein is UPF0371 protein CLD_0424.